A 486-amino-acid chain; its full sequence is Cephamycin export protein CmcT (486 aa).

The next 14 helical transmembrane spans lie at Val24–Leu44, Ala56–Gly76, Val88–Ser108, Ala121–Gly141, Ala153–Leu173, Val178–Ala198, Leu210–Ser230, Ala241–Ala261, Leu284–Met304, Leu317–Leu337, Val345–Thr365, Ala369–Gly389, Phe418–Ser438, and Phe450–Leu470.

Belongs to the major facilitator superfamily.

It localises to the cell membrane. Involved in cephamycin export. The sequence is that of Cephamycin export protein CmcT (cmcT) from Amycolatopsis lactamdurans (Nocardia lactamdurans).